Here is a 311-residue protein sequence, read N- to C-terminus: Pyrimidine-specific ribonucleoside hydrolase RihA (311 aa).

His240 is an active-site residue.

The protein belongs to the IUNH family. RihA subfamily.

Functionally, hydrolyzes with equal efficiency cytidine or uridine to ribose and cytosine or uracil, respectively. The sequence is that of Pyrimidine-specific ribonucleoside hydrolase RihA from Escherichia coli O9:H4 (strain HS).